A 329-amino-acid chain; its full sequence is Malate dehydrogenase (329 aa).

Position 13-19 (13-19) interacts with NAD(+); that stretch reads GAAGNIS. Substrate is bound by residues R94 and R100. Residues N107, Q114, and 131–133 contribute to the NAD(+) site; that span reads VGN. Residues N133 and R164 each contribute to the substrate site. H189 functions as the Proton acceptor in the catalytic mechanism.

This sequence belongs to the LDH/MDH superfamily. MDH type 2 family.

It catalyses the reaction (S)-malate + NAD(+) = oxaloacetate + NADH + H(+). In terms of biological role, catalyzes the reversible oxidation of malate to oxaloacetate. The polypeptide is Malate dehydrogenase (Psychrobacter arcticus (strain DSM 17307 / VKM B-2377 / 273-4)).